We begin with the raw amino-acid sequence, 737 residues long: Polyribonucleotide nucleotidyltransferase (737 aa).

Residues aspartate 489 and aspartate 495 each coordinate Mg(2+). A KH domain is found at 556–615; it reads PKIDTIKIDVDKIKIVIGKGGETIDKIIAETGVKIDIDEEGNVSIYSSDQDAINRAKEII. One can recognise an S1 motif domain in the interval 625 to 693; the sequence is DEVYRAKVVR…EKGRIDASMK (69 aa). The segment at 691 to 737 is disordered; it reads SMKALLPRPPKPEHDEKGEKSERPHRPRHHKDHKPKKEFTETPKDSE. Residues 700-714 are compositionally biased toward basic and acidic residues; that stretch reads PKPEHDEKGEKSERP. Residues 715–724 show a composition bias toward basic residues; that stretch reads HRPRHHKDHK. A compositionally biased stretch (basic and acidic residues) spans 725-737; it reads PKKEFTETPKDSE.

The protein belongs to the polyribonucleotide nucleotidyltransferase family. Mg(2+) is required as a cofactor.

The protein localises to the cytoplasm. The enzyme catalyses RNA(n+1) + phosphate = RNA(n) + a ribonucleoside 5'-diphosphate. Functionally, involved in mRNA degradation. Catalyzes the phosphorolysis of single-stranded polyribonucleotides processively in the 3'- to 5'-direction. This is Polyribonucleotide nucleotidyltransferase from Streptococcus pneumoniae (strain 70585).